Reading from the N-terminus, the 334-residue chain is Thioredoxin reductase aclT (334 aa).

Residues 16-19 (GGPA), 38-43 (NASIDR), I93, A122, D294, and 302-303 (TL) each bind FAD.

The protein belongs to the class-II pyridine nucleotide-disulfide oxidoreductase family. Homodimer. FAD serves as cofactor.

It functions in the pathway mycotoxin biosynthesis. Thioredoxin reductase; part of the gene cluster that mediates the biosynthesis of aspirochlorine (or antibiotic A30641), an unusual halogenated spiro compound with distinctive antifungal properties due to selective inhibition of protein biosynthesis, and which is also active against bacteria, viruses, and murine tumor cells. The non-ribosomal peptide synthetase (NRPS) aclP is responsible the formation of the diketopiperazine (DKP) core from the condensation of 2 phenylalanine residues. One Phe residue is tailored into chlorotyrosine by hydroxylation and chlorination, whereas the second Phe undergoes an unprecedented C-C bond cleavage to be converted into glycine. After formation of the DKP, sulfur is incorporated into the DKP by conjugation with glutathione by aclG, followed by its stepwise degradation to the thiol by aclI, aclJ and aclK, and the dithiol oxidation by aclT. In addition, oxygenases (aclB, aclC, aclL and aclO) and O-methyltransferases (aclM and aclU) act as tailoring enzymes to produce the intermediate dechloroaspirochlorine. Ultimately, chlorination of dechloroaspirochlorine by the halogenase aclH is the last step in the aspirochlorine pathway. The polypeptide is Thioredoxin reductase aclT (Aspergillus oryzae (strain ATCC 42149 / RIB 40) (Yellow koji mold)).